The primary structure comprises 410 residues: Probable ATP-dependent RNA helicase MG308 (410 aa).

The Helicase ATP-binding domain maps to 26–179; it reads VFKLWPFQNI…KKQVINTKVI (154 aa). Position 39 to 46 (39 to 46) interacts with ATP; that stretch reads AETGSGKT. Positions 126-129 match the DEID box motif; the sequence is DEID. A Helicase C-terminal domain is found at 190-357; it reads LVKHFVVHLN…DLKFLTENNQ (168 aa).

It belongs to the DEAD box helicase family.

It catalyses the reaction ATP + H2O = ADP + phosphate + H(+). The chain is Probable ATP-dependent RNA helicase MG308 from Mycoplasma genitalium (strain ATCC 33530 / DSM 19775 / NCTC 10195 / G37) (Mycoplasmoides genitalium).